The chain runs to 273 residues: MARLLTTCCLLALLLAACTDVALSKKGKGKPSGGGWGAGSHRQPSYPRQPGYPHNPGYPHNPGYPHNPGYPHNPGYPHNPGYPQNPGYPHNPGYPGWGQGYNPSSGGSYHNQKPWKPPKTNFKHVAGAAAAGAVVGGLGGYAMGRVMSGMNYHFDSPDEYRWWSENSARYPNRVYYRDYSSPVPQDVFVADCFNITVTEYSIGPAAKKNTSEAVAAANQTEVEMENKVVTKVIREMCVQQYREYRLASGIQLHPADTWLAVLLLLLTTLFAMH.

The first 24 residues, 1–24, serve as a signal peptide directing secretion; it reads MARLLTTCCLLALLLAACTDVALS. Positions 25 to 121 are disordered; the sequence is KKGKGKPSGG…QKPWKPPKTN (97 aa). 8 repeat units span residues 42–47, 48–53, 54–59, 60–65, 66–71, 72–77, 78–83, and 84–89. Residues 42-89 are 8 X 6 AA tandem repeats of [HR]-[NQ]-P-G-Y-P; the sequence is RQPSYPRQPGYPHNPGYPHNPGYPHNPGYPHNPGYPHNPGYPQNPGYP. Positions 51-94 are enriched in low complexity; that stretch reads GYPHNPGYPHNPGYPHNPGYPHNPGYPHNPGYPQNPGYPHNPGY. 3 residues coordinate Cu(2+): H66, H72, and H78. Cu(2+)-binding residues include H90 and G93. A compositionally biased stretch (polar residues) spans 101–111; it reads YNPSSGGSYHN. C192 and C237 are disulfide-bonded. N194, N209, and N218 each carry an N-linked (GlcNAc...) asparagine glycan. S248 carries GPI-anchor amidated serine lipidation. Positions 249–273 are cleaved as a propeptide — removed in mature form; the sequence is GIQLHPADTWLAVLLLLLTTLFAMH.

It belongs to the prion family. As to quaternary structure, monomer and homodimer. Has a tendency to aggregate into amyloid fibrils containing a cross-beta spine, formed by a steric zipper of superposed beta-strands. Soluble oligomers may represent an intermediate stage on the path to fibril formation. Copper binding may promote oligomerization. In terms of tissue distribution, spinal cord and brain.

It is found in the cell membrane. Functionally, its primary physiological function is unclear. Has cytoprotective activity against internal or environmental stresses. May play a role in neuronal development and synaptic plasticity. May be required for neuronal myelin sheath maintenance. May play a role in iron uptake and iron homeostasis. Soluble oligomers are toxic to cultured neuroblastoma cells and induce apoptosis (in vitro). Association with GPC1 (via its heparan sulfate chains) targets PRNP to lipid rafts. Also provides Cu(2+) or Zn(2+) for the ascorbate-mediated GPC1 deaminase degradation of its heparan sulfate side chains. This chain is Major prion protein homolog (PRNP), found in Gallus gallus (Chicken).